Here is a 514-residue protein sequence, read N- to C-terminus: Histidine ammonia-lyase (514 aa).

The segment at residues 147-149 is a cross-link (5-imidazolinone (Ala-Gly)); the sequence is ASG. S148 is subject to 2,3-didehydroalanine (Ser).

Belongs to the PAL/histidase family. Contains an active site 4-methylidene-imidazol-5-one (MIO), which is formed autocatalytically by cyclization and dehydration of residues Ala-Ser-Gly.

It localises to the cytoplasm. It carries out the reaction L-histidine = trans-urocanate + NH4(+). The protein operates within amino-acid degradation; L-histidine degradation into L-glutamate; N-formimidoyl-L-glutamate from L-histidine: step 1/3. The protein is Histidine ammonia-lyase of Gloeobacter violaceus (strain ATCC 29082 / PCC 7421).